The following is a 505-amino-acid chain: Aspartyl/glutamyl-tRNA(Asn/Gln) amidotransferase subunit B (505 aa).

Belongs to the GatB/GatE family. GatB subfamily. As to quaternary structure, heterotrimer of A, B and C subunits.

The enzyme catalyses L-glutamyl-tRNA(Gln) + L-glutamine + ATP + H2O = L-glutaminyl-tRNA(Gln) + L-glutamate + ADP + phosphate + H(+). It carries out the reaction L-aspartyl-tRNA(Asn) + L-glutamine + ATP + H2O = L-asparaginyl-tRNA(Asn) + L-glutamate + ADP + phosphate + 2 H(+). In terms of biological role, allows the formation of correctly charged Asn-tRNA(Asn) or Gln-tRNA(Gln) through the transamidation of misacylated Asp-tRNA(Asn) or Glu-tRNA(Gln) in organisms which lack either or both of asparaginyl-tRNA or glutaminyl-tRNA synthetases. The reaction takes place in the presence of glutamine and ATP through an activated phospho-Asp-tRNA(Asn) or phospho-Glu-tRNA(Gln). This Streptomyces avermitilis (strain ATCC 31267 / DSM 46492 / JCM 5070 / NBRC 14893 / NCIMB 12804 / NRRL 8165 / MA-4680) protein is Aspartyl/glutamyl-tRNA(Asn/Gln) amidotransferase subunit B.